We begin with the raw amino-acid sequence, 574 residues long: Interleukin-1 receptor-like 2 (574 aa).

Positions 1–21 (MGVTSLLFCGVFFLLLLFVAA) are cleaved as a signal peptide. Residues 22–338 (DTCEDIFMHN…ILIYPVPDFR (317 aa)) are Extracellular-facing. 3 Ig-like C2-type domains span residues 25-113 (EDIF…VNLT), 132-215 (PDVY…IRNY), and 225-321 (YGRR…TCHA). Asparagine 43, asparagine 55, and asparagine 111 each carry an N-linked (GlcNAc...) asparagine glycan. Cysteine 44 and cysteine 97 form a disulfide bridge. Cysteine 149 and cysteine 199 are disulfide-bonded. Residues asparagine 231, asparagine 237, asparagine 253, asparagine 269, asparagine 290, and asparagine 302 are each glycosylated (N-linked (GlcNAc...) asparagine). A disulfide bond links cysteine 252 and cysteine 319. The chain crosses the membrane as a helical span at residues 339 to 359 (AYLLGGLMAFLLLVVSVLFIY). Topologically, residues 360–574 (NSFKIDIMLW…CNAATGLITP (215 aa)) are cytoplasmic. One can recognise a TIR domain in the interval 384-539 (KLYDAYVLYP…KFWKKVRYHM (156 aa)). Glutamate 470 is a catalytic residue.

This sequence belongs to the interleukin-1 receptor family. As to quaternary structure, interacts with IL1RAP; the association is enhanced by IL36B indicative for an functional signaling complex and inhibited by IL36RN. Expressed in bone marrow-derived dendritic cells, splenic CD4(+) T-cells, bone marrow-derived macrophages and bone marrow-derived neutrophils.

Its subcellular location is the membrane. It carries out the reaction NAD(+) + H2O = ADP-D-ribose + nicotinamide + H(+). Functionally, receptor for interleukin-36 (IL36A, IL36B and IL36G). After binding to interleukin-36 associates with the coreceptor IL1RAP to form the interleukin-36 receptor complex which mediates interleukin-36-dependent activation of NF-kappa-B, MAPK and other pathways. The IL-36 signaling system is thought to be present in epithelial barriers and to take part in local inflammatory response; it is similar to the IL-1 system. Seems to be involved in skin inflammatory response by induction of the IL-23/IL-17/IL-22 pathway. This chain is Interleukin-1 receptor-like 2 (Il1rl2), found in Mus musculus (Mouse).